Consider the following 486-residue polypeptide: Cysteine--tRNA ligase (486 aa).

Cys-30 serves as a coordination point for Zn(2+). The 'HIGH' region signature appears at 32–42 (PTVYDRAHLGN). Residues Cys-221, His-246, and Glu-250 each coordinate Zn(2+). A 'KMSKS' region motif is present at residues 279–283 (KMSKS). Residue Lys-282 participates in ATP binding.

Belongs to the class-I aminoacyl-tRNA synthetase family. Monomer. Requires Zn(2+) as cofactor.

The protein localises to the cytoplasm. It carries out the reaction tRNA(Cys) + L-cysteine + ATP = L-cysteinyl-tRNA(Cys) + AMP + diphosphate. This is Cysteine--tRNA ligase from Cereibacter sphaeroides (strain ATCC 17025 / ATH 2.4.3) (Rhodobacter sphaeroides).